Reading from the N-terminus, the 564-residue chain is Homeobox protein unc-62 (564 aa).

Disordered stretches follow at residues 40-59 (NEQF…ADPA), 216-270 (ERAS…VMGG), 293-313 (SSSS…LHST), 328-397 (PSTC…KVPK), and 455-503 (IDQN…PSSL). Positions 133 to 218 (SSDVCSSASF…PLDIVGDERA (86 aa)) constitute an MEIS N-terminal domain. Residues 219–230 (SSSQPPMSPGSM) are compositionally biased toward low complexity. Composition is skewed to polar residues over residues 328–344 (PSTC…TPLS) and 381–390 (LSDSANGSQN). Residues 392 to 454 (KRKVPKVFSK…NARRRIVQPM (63 aa)) constitute a DNA-binding region (homeobox; TALE-type). 2 stretches are compositionally biased toward polar residues: residues 455–469 (IDQN…QMNV) and 494–503 (ANYSPDPSSL).

The protein belongs to the TALE/MEIS homeobox family. Forms a heterodimer with homeobox ceh-60.

It localises to the nucleus. Its function is as follows. Acts redundantly with ceh-20 and ceh-40 to perform overlapping roles during embryogenesis. Required for postembryonic development of the ectoderm, including the Q, V and P cell lineages, playing a crucial role in ensuring that these cells and their descendants undergo their invariant patterns of cell division, migration, fusion and morphogenesis. Has a role in the mig-13 pathway to promote anterior migration of neuroblasts in the Q lineage. Required for multiple roles in regulating vulva development. Associates with homeobox ceh-60 to regulate gene expression, including repression of genes involved in innate immunity and activation of genes involved in vitellogenesis. Involved in lipid homeostasis, contributing to the formation of the cuticle. The polypeptide is Homeobox protein unc-62 (unc-62) (Caenorhabditis elegans).